The chain runs to 419 residues: Phospholipase A1-IIgamma (419 aa).

Coiled coils occupy residues 1–21 and 207–227; these read MKRK…EFAK and NARD…KDEE. Ser-236 (acyl-ester intermediate) is an active-site residue. Catalysis depends on charge relay system residues Ser-236, Asp-302, and His-339.

It belongs to the AB hydrolase superfamily. Lipase family. Expressed in seedlings, stems and siliques, and, to a lower extent, in flowers.

The protein resides in the cytoplasm. Acylhydrolase that catalyzes the hydrolysis of 1,3-diacylglycerol (1,3-DAG) and 1-monoacylglycerol (1-MAG) at the sn-1 position. High activity toward 1,3-DAG and 1-MAG, but low activity toward 1,2-diacylglycerol (1,2-DAG) and 1-lysophosphatidylcholine (1-LPC), and no activity toward phosphatidylcholine (PC), monogalactosyldiacylglycerol (MGDG), digalactosyldiacylglycerol (DGDG), triacylglycerol (TAG) and 2-monoacylglycerol (2-MAG). May be involved in the negative regulation of seedling establishment by inhibiting the breakdown, beta-oxidation and mobilization of seed storage oils. This chain is Phospholipase A1-IIgamma (DSEL), found in Arabidopsis thaliana (Mouse-ear cress).